We begin with the raw amino-acid sequence, 205 residues long: GTP cyclohydrolase-2 (205 aa).

49–53 (RLHSE) is a GTP binding site. 3 residues coordinate Zn(2+): Cys-54, Cys-65, and Cys-67. Residues Gln-70, 92-94 (EGR), and Thr-114 contribute to the GTP site. Catalysis depends on Asp-126, which acts as the Proton acceptor. Arg-128 acts as the Nucleophile in catalysis. Residues Thr-149 and Lys-154 each contribute to the GTP site.

It belongs to the GTP cyclohydrolase II family. It depends on Zn(2+) as a cofactor.

It carries out the reaction GTP + 4 H2O = 2,5-diamino-6-hydroxy-4-(5-phosphoribosylamino)-pyrimidine + formate + 2 phosphate + 3 H(+). The protein operates within cofactor biosynthesis; riboflavin biosynthesis; 5-amino-6-(D-ribitylamino)uracil from GTP: step 1/4. In terms of biological role, catalyzes the conversion of GTP to 2,5-diamino-6-ribosylamino-4(3H)-pyrimidinone 5'-phosphate (DARP), formate and pyrophosphate. In Pseudomonas aeruginosa (strain UCBPP-PA14), this protein is GTP cyclohydrolase-2.